Reading from the N-terminus, the 201-residue chain is Protocatechuate 3,4-dioxygenase alpha chain (201 aa).

R134 contributes to the 3,4-dihydroxybenzoate binding site.

The protein belongs to the intradiol ring-cleavage dioxygenase family. In terms of assembly, the enzyme is an oligomer of 12 copies of the alpha and beta chains. Fe(3+) serves as cofactor.

The catalysed reaction is 3,4-dihydroxybenzoate + O2 = 3-carboxy-cis,cis-muconate + 2 H(+). It participates in aromatic compound metabolism; beta-ketoadipate pathway; 3-carboxy-cis,cis-muconate from 3,4-dihydroxybenzoate: step 1/1. Plays an essential role in the utilization of numerous aromatic and hydroaromatic compounds via the beta-ketoadipate pathway. This Pseudomonas putida (Arthrobacter siderocapsulatus) protein is Protocatechuate 3,4-dioxygenase alpha chain (pcaG).